The chain runs to 107 residues: Nucleoid-associated protein R00231 (107 aa).

Belongs to the YbaB/EbfC family. In terms of assembly, homodimer.

The protein localises to the cytoplasm. The protein resides in the nucleoid. Binds to DNA and alters its conformation. May be involved in regulation of gene expression, nucleoid organization and DNA protection. This Rhizobium meliloti (strain 1021) (Ensifer meliloti) protein is Nucleoid-associated protein R00231.